The following is a 534-amino-acid chain: EH domain-containing protein 1 (534 aa).

Residue Met-1 is modified to N-acetylmethionine. Residues 55–286 (FDNKPMVLLV…DLFKDIQSLP (232 aa)) enclose the Dynamin-type G domain. The G1 motif stretch occupies residues 65–72 (GQYSTGKT). 65-72 (GQYSTGKT) provides a ligand contact to ATP. A G2 motif region spans residues 91-92 (EP). The interval 153–156 (DTPG) is G3 motif. Residues 198–227 (DEFSEVIKALKNHEDKIRVVLNKADQIETQ) are a coiled coil. The G4 motif stretch occupies residues 219-222 (NKAD). Residue Lys-220 participates in ATP binding. A region of interest (G5 motif) is located at residue Ile-243. Residue Trp-258 coordinates ATP. In terms of domain architecture, EH spans 444 to 532 (DKPTYDEIFY…PHLVPPSKRR (89 aa)). At Ser-456 the chain carries Phosphoserine. The EF-hand domain occupies 476-511 (LPNTVLGKIWKLADVDRDGLLDDEEFALANHLIKVK). Residues Asp-489, Asp-491, Asp-493, and Glu-500 each contribute to the Ca(2+) site.

This sequence belongs to the TRAFAC class dynamin-like GTPase superfamily. Dynamin/Fzo/YdjA family. EHD subfamily. As to quaternary structure, homooligomer, and heterooligomer with EHD2, EHD3 and EHD4, ATP-binding is required for heterooligomerization. Interacts (via EH domain) with MICALL1 (via NPF1 motif); the interaction is direct and recruits EHD1 to membranes. Interacts with RAB35; the interaction is indirect through MICALL1 and recruits EHD1 to membranes. Interacts (via EH domain) with PACSIN2 (via NPF motifs); regulates localization to tubular recycling endosome membranes. Interacts with PACSIN1. Interacts with RAB8A. Interacts with FER1L5 (via second C2 domain). Interacts with MYOF. Interacts with ZFYVE20. Interacts (via EH domain) with RAB11FIP2.

It localises to the recycling endosome membrane. It is found in the early endosome membrane. The protein resides in the cell membrane. The protein localises to the cell projection. Its subcellular location is the cilium membrane. Functionally, ATP- and membrane-binding protein that controls membrane reorganization/tubulation upon ATP hydrolysis. Acts in early endocytic membrane fusion and membrane trafficking of recycling endosomes. Recruited to endosomal membranes upon nerve growth factor stimulation, indirectly regulates neurite outgrowth. Plays a role in myoblast fusion. Involved in the unidirectional retrograde dendritic transport of endocytosed BACE1 and in efficient sorting of BACE1 to axons implicating a function in neuronal APP processing. Plays a role in the formation of the ciliary vesicle (CV), an early step in cilium biogenesis. Proposed to be required for the fusion of distal appendage vesicles (DAVs) to form the CV by recruiting SNARE complex component SNAP29. Is required for recruitment of transition zone proteins CEP290, RPGRIP1L, TMEM67 and B9D2, and of IFT20 following DAV reorganization before Rab8-dependent ciliary membrane extension. Required for the loss of CCP110 form the mother centriole essential for the maturation of the basal body during ciliogenesis. This is EH domain-containing protein 1 from Bos taurus (Bovine).